The primary structure comprises 338 residues: Uroporphyrinogen decarboxylase (338 aa).

Substrate is bound by residues 23 to 27, Asp72, Tyr146, Thr201, and His312; that span reads RQAGR.

This sequence belongs to the uroporphyrinogen decarboxylase family. As to quaternary structure, homodimer.

It localises to the cytoplasm. The catalysed reaction is uroporphyrinogen III + 4 H(+) = coproporphyrinogen III + 4 CO2. It functions in the pathway porphyrin-containing compound metabolism; protoporphyrin-IX biosynthesis; coproporphyrinogen-III from 5-aminolevulinate: step 4/4. In terms of biological role, catalyzes the decarboxylation of four acetate groups of uroporphyrinogen-III to yield coproporphyrinogen-III. This is Uroporphyrinogen decarboxylase from Thermodesulfovibrio yellowstonii (strain ATCC 51303 / DSM 11347 / YP87).